Consider the following 472-residue polypeptide: Maintenance of mitochondrial morphology protein 1 (472 aa).

Topologically, residues 1-22 (MAFQQGEAAPVSTQSSLSFTQG) are lumenal. Residues 23–43 (FLLGQLSVVLLIGAFIKFFIF) traverse the membrane as a helical segment. Residues 44 to 472 (GEAPPPPSRG…GSMPEAPGAQ (429 aa)) lie on the Cytoplasmic side of the membrane. Disordered stretches follow at residues 51–92 (SRGL…VPSS), 270–303 (LHTPSPMPSPPTAGAQPAAGAQPTDGGDIPPKSS), and 370–472 (RMGR…PGAQ). The segment covering 81–92 (STSNVLRPVPSS) has biased composition (polar residues). Positions 124–365 (QPESLDWFNV…EPRVQVVGLP (242 aa)) constitute an SMP-LTD domain. Pro residues predominate over residues 270–280 (LHTPSPMPSPP). A compositionally biased stretch (low complexity) spans 281-297 (TAGAQPAAGAQPTDGGD). Positions 450–460 (TRERSLGDDFH) are enriched in basic and acidic residues.

The protein belongs to the MMM1 family. In terms of assembly, homodimer. Component of the ER-mitochondria encounter structure (ERMES) or MDM complex, composed of mmm1, mdm10, mdm12 and mdm34. A mmm1 homodimer associates with one molecule of mdm12 on each side in a pairwise head-to-tail manner, and the SMP-LTD domains of mmm1 and mdm12 generate a continuous hydrophobic tunnel for phospholipid trafficking.

It localises to the endoplasmic reticulum membrane. Component of the ERMES/MDM complex, which serves as a molecular tether to connect the endoplasmic reticulum (ER) and mitochondria. Components of this complex are involved in the control of mitochondrial shape and protein biogenesis, and function in nonvesicular lipid trafficking between the ER and mitochondria. The mdm12-mmm1 subcomplex functions in the major beta-barrel assembly pathway that is responsible for biogenesis of all outer membrane beta-barrel proteins, and acts in a late step after the SAM complex. The mdm10-mdm12-mmm1 subcomplex further acts in the TOM40-specific pathway after the action of the mdm12-mmm1 complex. Essential for establishing and maintaining the structure of mitochondria and maintenance of mtDNA nucleoids. The chain is Maintenance of mitochondrial morphology protein 1 from Emericella nidulans (strain FGSC A4 / ATCC 38163 / CBS 112.46 / NRRL 194 / M139) (Aspergillus nidulans).